Consider the following 311-residue polypeptide: Formimidoylglutamase (311 aa).

Residues H130, D155, H157, D159, C242, and D244 each contribute to the Mn(2+) site.

This sequence belongs to the arginase family. Requires Mn(2+) as cofactor.

It carries out the reaction N-formimidoyl-L-glutamate + H2O = formamide + L-glutamate. It participates in amino-acid degradation; L-histidine degradation into L-glutamate; L-glutamate from N-formimidoyl-L-glutamate (hydrolase route): step 1/1. Its function is as follows. Catalyzes the conversion of N-formimidoyl-L-glutamate to L-glutamate and formamide. In Staphylococcus aureus (strain bovine RF122 / ET3-1), this protein is Formimidoylglutamase.